The following is a 358-amino-acid chain: Fructose-bisphosphate aldolase (358 aa).

Position 62 (Ser62) interacts with D-glyceraldehyde 3-phosphate. The Proton donor role is filled by Asp109. Residues His110, Asp144, Glu174, and His226 each contribute to the Zn(2+) site. A dihydroxyacetone phosphate-binding site is contributed by Gly227. Residue His264 coordinates Zn(2+). Residues 265 to 267 (GGS) and 286 to 289 (NIDT) each bind dihydroxyacetone phosphate.

The protein belongs to the class II fructose-bisphosphate aldolase family. The cofactor is Zn(2+).

It carries out the reaction beta-D-fructose 1,6-bisphosphate = D-glyceraldehyde 3-phosphate + dihydroxyacetone phosphate. The protein operates within carbohydrate degradation; glycolysis; D-glyceraldehyde 3-phosphate and glycerone phosphate from D-glucose: step 4/4. Its function is as follows. Catalyzes the aldol condensation of dihydroxyacetone phosphate (DHAP or glycerone-phosphate) with glyceraldehyde 3-phosphate (G3P) to form fructose 1,6-bisphosphate (FBP) in gluconeogenesis and the reverse reaction in glycolysis. The protein is Fructose-bisphosphate aldolase (fba) of Edwardsiella ictaluri (strain 93-146).